A 448-amino-acid chain; its full sequence is MTHVSFNYEKALSFFEKQEITNLEPFVHTAHQMIHERIGAGKDFLGWLDLPRNYNREEYTRIKAAADKIKKDSDILLVIGIGGSYLGAKAALEMLNHSFQNLLSKDQRQVPQIIFVGHHLSSTYMTELFDILKDKDFSINVISKSGTTTEPAIAFRVFKKYLEEKYGQDEAKKRIYATTDRSKGALKTTADSNDYETFVIPDDVGGRYSVLTAVGLLPIAASGINIDDMMEGAKAGMEDLANPVISENPAYQYAAVRNILYQKGKVTELLINYEPNLQYFSEWWKQLFGESEGKNQKGIYPSSANFTTDLHSLGQYIQEGRRNIFETILHVNEPKKDFTLEKEESDLDGLNYLAGKSIHEINDKAFQGTLLAHTDGDVPNLIVEVPRLDAYTFGYLVYFFEKACAISGYILGVNPFDQPGVEAYKKNMFALLGKPGFEDQKEALEKRL.

The active-site Proton donor is Glu290. Active-site residues include His311 and Lys425.

It belongs to the GPI family.

The protein resides in the cytoplasm. The catalysed reaction is alpha-D-glucose 6-phosphate = beta-D-fructose 6-phosphate. It participates in carbohydrate biosynthesis; gluconeogenesis. Its pathway is carbohydrate degradation; glycolysis; D-glyceraldehyde 3-phosphate and glycerone phosphate from D-glucose: step 2/4. Catalyzes the reversible isomerization of glucose-6-phosphate to fructose-6-phosphate. The chain is Glucose-6-phosphate isomerase from Oceanobacillus iheyensis (strain DSM 14371 / CIP 107618 / JCM 11309 / KCTC 3954 / HTE831).